Consider the following 255-residue polypeptide: tRNA (guanine-N(1)-)-methyltransferase (255 aa).

S-adenosyl-L-methionine-binding positions include glycine 113 and 133–138; that span reads IGDYVL.

Belongs to the RNA methyltransferase TrmD family. Homodimer.

Its subcellular location is the cytoplasm. The enzyme catalyses guanosine(37) in tRNA + S-adenosyl-L-methionine = N(1)-methylguanosine(37) in tRNA + S-adenosyl-L-homocysteine + H(+). Its function is as follows. Specifically methylates guanosine-37 in various tRNAs. The polypeptide is tRNA (guanine-N(1)-)-methyltransferase (Serratia proteamaculans (strain 568)).